The following is a 329-amino-acid chain: Short-chain dehydrogenase/reductase tropG (329 aa).

NADP(+)-binding residues include Lys-57, Asp-86, Asn-113, Tyr-203, and Lys-207. Tyr-203 (proton acceptor) is an active-site residue. Lys-207 (lowers pKa of active site Tyr) is an active-site residue.

This sequence belongs to the short-chain dehydrogenases/reductases (SDR) family.

The protein operates within secondary metabolite biosynthesis. In terms of biological role, short-chain dehydrogenase/reductase; part of the gene cluster that mediates the biosynthesis of the tropolone class of fungal maleic anhydrides. The pathway begins with the synthesis of 3-methylorcinaldehyde by the non-reducing polyketide synthase (PKS) tropA. 3-methylorcinaldehyde is the substrate for the FAD-dependent monooxygenase tropB to yield a dearomatized hydroxycyclohexadione. The 2-oxoglutarate-dependent dioxygenase tropC then performs the oxidative ring expansion to provide the first tropolone metabolite stipitaldehyde. Trop D converts stipitaldehyde into stipitacetal which is in turn converted to stipitalide by the short-chain dehydrogenase/reductase tropE. The next steps involve tropF, tropG, tropH, tropI and tropJ to form successive tropolone maleic anhydrides including stipitaldehydic, stipitatonic and stipitatic acids. The polypeptide is Short-chain dehydrogenase/reductase tropG (Talaromyces stipitatus (strain ATCC 10500 / CBS 375.48 / QM 6759 / NRRL 1006) (Penicillium stipitatum)).